The following is a 690-amino-acid chain: Protein-glucosylgalactosylhydroxylysine glucosidase (690 aa).

299–300 (WD) provides a ligand contact to substrate. E429 (proton donor) is an active-site residue. 497-498 (KQ) serves as a coordination point for substrate.

It belongs to the glycosyl hydrolase 65 family.

The enzyme catalyses (5R)-5-O-[alpha-D-glucosyl-(1-&gt;2)-beta-D-galactosyl]-5-hydroxy-L-lysyl-[collagen] + H2O = (5R)-5-O-(beta-D-galactosyl)-5-hydroxy-L-lysyl-[collagen] + D-glucose. Catalyzes the hydrolysis of glucose from the disaccharide unit linked to hydroxylysine residues of collagen and collagen-like proteins. The chain is Protein-glucosylgalactosylhydroxylysine glucosidase from Mus musculus (Mouse).